The primary structure comprises 155 residues: Probable ribosome biogenesis protein RLP24 (155 aa).

Belongs to the eukaryotic ribosomal protein eL24 family.

This Encephalitozoon cuniculi (strain GB-M1) (Microsporidian parasite) protein is Probable ribosome biogenesis protein RLP24 (RPL24).